A 253-amino-acid chain; its full sequence is Chitooligosaccharide deacetylase (253 aa).

Mg(2+)-binding residues include histidine 61 and histidine 126.

It belongs to the YdjC deacetylase family. ChbG subfamily. In terms of assembly, homodimer. The cofactor is Mg(2+).

The protein resides in the cytoplasm. It carries out the reaction N,N'-diacetylchitobiose + H2O = N-acetyl-beta-D-glucosaminyl-(1-&gt;4)-D-glucosamine + acetate. The enzyme catalyses diacetylchitobiose-6'-phosphate + H2O = N'-monoacetylchitobiose-6'-phosphate + acetate. The protein operates within glycan degradation; chitin degradation. Its function is as follows. Involved in the degradation of chitin. ChbG is essential for growth on the acetylated chitooligosaccharides chitobiose and chitotriose but is dispensable for growth on cellobiose and chitosan dimer, the deacetylated form of chitobiose. Deacetylation of chitobiose-6-P and chitotriose-6-P is necessary for both the activation of the chb promoter by the regulatory protein ChbR and the hydrolysis of phosphorylated beta-glucosides by the phospho-beta-glucosidase ChbF. Catalyzes the removal of only one acetyl group from chitobiose-6-P to yield monoacetylchitobiose-6-P, the inducer of ChbR and the substrate of ChbF. In Serratia marcescens, this protein is Chitooligosaccharide deacetylase.